The following is a 351-amino-acid chain: ATP-dependent protease ATP-binding subunit-like protein (351 aa).

Residues 1–26 (MPYITDMLRDRNSAATPPAEERSEPV) are disordered. 79 to 86 (GPTGVGKT) serves as a coordination point for ATP.

It belongs to the ClpA/ClpB family.

The protein is ATP-dependent protease ATP-binding subunit-like protein of Rhodococcus erythropolis (Arthrobacter picolinophilus).